A 121-amino-acid polypeptide reads, in one-letter code: Protein MGF 110-5L (121 aa).

The N-terminal stretch at 1–18 is a signal peptide; the sequence is MLVIFLGILGLLANQVSS. N62 and N116 each carry an N-linked (GlcNAc...) asparagine; by host glycan.

This sequence belongs to the asfivirus MGF 110 family.

In terms of biological role, plays a role in virus cell tropism, and may be required for efficient virus replication in macrophages. This African swine fever virus (isolate Tick/South Africa/Pretoriuskop Pr4/1996) (ASFV) protein is Protein MGF 110-5L.